A 128-amino-acid polypeptide reads, in one-letter code: Fluoride-specific ion channel FluC (128 aa).

4 helical membrane passes run 1-21 (MPERYAALLLVGAGGFVGATA), 45-65 (LAGCFLIGFISQLSVSSSLVS), 70-90 (LLLATGFCGGFTTFSSYMYEI), and 99-119 (IFYSTLYLLGSIVGGILCLYF). Na(+) contacts are provided by glycine 78 and threonine 81.

It belongs to the fluoride channel Fluc/FEX (TC 1.A.43) family.

It localises to the cell inner membrane. The enzyme catalyses fluoride(in) = fluoride(out). Na(+) is not transported, but it plays an essential structural role and its presence is essential for fluoride channel function. Functionally, fluoride-specific ion channel. Important for reducing fluoride concentration in the cell, thus reducing its toxicity. The protein is Fluoride-specific ion channel FluC of Chlorobium phaeobacteroides (strain BS1).